We begin with the raw amino-acid sequence, 90 residues long: Protein LURE 1.4 (90 aa).

An N-terminal signal peptide occupies residues methionine 1 to serine 19. Asparagine 23 carries an N-linked (GlcNAc...) asparagine glycan. 3 cysteine pairs are disulfide-bonded: cysteine 58-cysteine 75, cysteine 61-cysteine 82, and cysteine 65-cysteine 84. The segment at arginine 67–serine 87 is PRK6 binding.

It belongs to the DEFL family. In terms of assembly, binds to PRK6 LRRs. As to expression, expressed in the pistil. Detected exclusively in the synergid cells.

It localises to the secreted. Its function is as follows. Pollen tube attractants guiding pollen tubes to the ovular micropyle. This is Protein LURE 1.4 from Arabidopsis thaliana (Mouse-ear cress).